Consider the following 656-residue polypeptide: Choline transporter-like protein 1 (656 aa).

G2 carries the N-myristoyl glycine lipid modification. The Cytoplasmic segment spans residues G2–P29. A helical transmembrane segment spans residues W30–A50. At T51–K211 the chain is on the extracellular side. 2 N-linked (GlcNAc...) asparagine glycosylation sites follow: N134 and N179. A helical transmembrane segment spans residues E212–I232. Residues R233–R237 lie on the Cytoplasmic side of the membrane. A helical transmembrane segment spans residues V238–L258. Topologically, residues W259–A287 are extracellular. Residues L288–V308 form a helical membrane-spanning segment. Topologically, residues M309–A314 are cytoplasmic. A helical transmembrane segment spans residues L315 to F335. The Extracellular portion of the chain corresponds to Q336–P337. The chain crosses the membrane as a helical span at residues F338 to L358. Over G359 to P379 the chain is Cytoplasmic. The helical transmembrane segment at L380 to A400 threads the bilayer. Topologically, residues C401 to T441 are extracellular. The helical transmembrane segment at V442–I462 threads the bilayer. Over H463–D536 the chain is Cytoplasmic. Residues F537–L557 traverse the membrane as a helical segment. Over L558–T565 the chain is Extracellular. A helical transmembrane segment spans residues V566–L586. Over S587–A656 the chain is Cytoplasmic. The disordered stretch occupies residues A635 to A656. The residue at position 651 (S651) is a Phosphoserine.

It belongs to the CTL (choline transporter-like) family. Expressed in neurons, oligodendrocytes and astrocytes. Also expressed in the mucosal cell layer of the colon. In the developing brain, isoform 1 is expressed in both neurons and oligodendroglial cells, whereas isoform 2 is restricted to oligodendroglial cells.

Its subcellular location is the cell membrane. It is found in the mitochondrion outer membrane. The catalysed reaction is choline(out) + n H(+)(in) = choline(in) + n H(+)(out). It catalyses the reaction ethanolamine(out) + n H(+)(in) = ethanolamine(in) + n H(+)(out). Choline transporter, acts as a choline/H+ antiporter. Also acts as a high-affinity ethanolamine/H+ antiporter, regulating the supply of extracellular ethanolamine (Etn) for the CDP-Etn pathway, redistribute intracellular Etn and balance the CDP-Cho and CDP-Etn arms of the Kennedy pathway. Involved in membrane synthesis and myelin production. This chain is Choline transporter-like protein 1 (Slc44a1), found in Rattus norvegicus (Rat).